Reading from the N-terminus, the 162-residue chain is Phosphopantetheine adenylyltransferase (162 aa).

S11 serves as a coordination point for substrate. Residues 11-12 (SF) and H19 contribute to the ATP site. Positions 43, 76, and 90 each coordinate substrate. Residues 91–93 (GLR), E101, and 126–132 (HLYISSS) contribute to the ATP site.

The protein belongs to the bacterial CoaD family. As to quaternary structure, homohexamer. Mg(2+) serves as cofactor.

It is found in the cytoplasm. It catalyses the reaction (R)-4'-phosphopantetheine + ATP + H(+) = 3'-dephospho-CoA + diphosphate. Its pathway is cofactor biosynthesis; coenzyme A biosynthesis; CoA from (R)-pantothenate: step 4/5. In terms of biological role, reversibly transfers an adenylyl group from ATP to 4'-phosphopantetheine, yielding dephospho-CoA (dPCoA) and pyrophosphate. The sequence is that of Phosphopantetheine adenylyltransferase from Streptococcus pneumoniae (strain Taiwan19F-14).